The chain runs to 180 residues: Large ribosomal subunit protein uL5 (180 aa).

Belongs to the universal ribosomal protein uL5 family. Part of the 50S ribosomal subunit; part of the 5S rRNA/L5/L18/L25 subcomplex. Contacts the 5S rRNA and the P site tRNA. Forms a bridge to the 30S subunit in the 70S ribosome.

This is one of the proteins that bind and probably mediate the attachment of the 5S RNA into the large ribosomal subunit, where it forms part of the central protuberance. In the 70S ribosome it contacts protein S13 of the 30S subunit (bridge B1b), connecting the 2 subunits; this bridge is implicated in subunit movement. Contacts the P site tRNA; the 5S rRNA and some of its associated proteins might help stabilize positioning of ribosome-bound tRNAs. This chain is Large ribosomal subunit protein uL5, found in Clostridium botulinum (strain Loch Maree / Type A3).